The sequence spans 311 residues: tRNA-cytidine(32) 2-sulfurtransferase (311 aa).

The short motif at 58–63 is the PP-loop motif element; that stretch reads SGGKDS. The [4Fe-4S] cluster site is built by Cys-133, Cys-136, and Cys-224.

This sequence belongs to the TtcA family. Homodimer. Requires Mg(2+) as cofactor. [4Fe-4S] cluster is required as a cofactor.

The protein resides in the cytoplasm. It catalyses the reaction cytidine(32) in tRNA + S-sulfanyl-L-cysteinyl-[cysteine desulfurase] + AH2 + ATP = 2-thiocytidine(32) in tRNA + L-cysteinyl-[cysteine desulfurase] + A + AMP + diphosphate + H(+). The protein operates within tRNA modification. Catalyzes the ATP-dependent 2-thiolation of cytidine in position 32 of tRNA, to form 2-thiocytidine (s(2)C32). The sulfur atoms are provided by the cysteine/cysteine desulfurase (IscS) system. This Polaromonas sp. (strain JS666 / ATCC BAA-500) protein is tRNA-cytidine(32) 2-sulfurtransferase.